Here is a 299-residue protein sequence, read N- to C-terminus: 21S rRNA pseudouridine(2819) synthase (299 aa).

Residue Asp-106 is part of the active site.

This sequence belongs to the pseudouridine synthase RluA family.

The protein localises to the mitochondrion. It carries out the reaction uridine(2819) in 21S rRNA = pseudouridine(2819) in 21S rRNA. In terms of biological role, pseudouridylate synthase responsible for the pseudouridine-2819 formation in mitochondrial 21S rRNA. May modulate the efficiency or the fidelity of the mitochondrial translation machinery. This is 21S rRNA pseudouridine(2819) synthase (PUS5) from Kluyveromyces lactis (strain ATCC 8585 / CBS 2359 / DSM 70799 / NBRC 1267 / NRRL Y-1140 / WM37) (Yeast).